A 550-amino-acid polypeptide reads, in one-letter code: Chaperonin GroEL (550 aa).

Residues 30–33 (TLGP), K51, 87–91 (DGTTT), G415, and D495 each bind ATP.

It belongs to the chaperonin (HSP60) family. As to quaternary structure, forms a cylinder of 14 subunits composed of two heptameric rings stacked back-to-back. Interacts with the co-chaperonin GroES.

It is found in the cytoplasm. The enzyme catalyses ATP + H2O + a folded polypeptide = ADP + phosphate + an unfolded polypeptide.. Together with its co-chaperonin GroES, plays an essential role in assisting protein folding. The GroEL-GroES system forms a nano-cage that allows encapsulation of the non-native substrate proteins and provides a physical environment optimized to promote and accelerate protein folding. The polypeptide is Chaperonin GroEL (Shewanella piezotolerans (strain WP3 / JCM 13877)).